The following is a 303-amino-acid chain: Protoheme IX farnesyltransferase (303 aa).

9 helical membrane-spanning segments follow: residues 26-46 (VVAL…PGMV), 48-68 (IDIL…AAAV), 98-118 (AILF…VWVN), 120-140 (LTAW…TFWL), 148-168 (IVIG…AVTG), 174-194 (ALLL…ALAV), 221-241 (ILLY…THML), 244-264 (LYLL…VAMM), and 278-298 (YSIV…YLLP).

This sequence belongs to the UbiA prenyltransferase family. Protoheme IX farnesyltransferase subfamily.

The protein localises to the cell inner membrane. The enzyme catalyses heme b + (2E,6E)-farnesyl diphosphate + H2O = Fe(II)-heme o + diphosphate. Its pathway is porphyrin-containing compound metabolism; heme O biosynthesis; heme O from protoheme: step 1/1. In terms of biological role, converts heme B (protoheme IX) to heme O by substitution of the vinyl group on carbon 2 of heme B porphyrin ring with a hydroxyethyl farnesyl side group. The sequence is that of Protoheme IX farnesyltransferase from Saccharophagus degradans (strain 2-40 / ATCC 43961 / DSM 17024).